The primary structure comprises 1010 residues: Eukaryotic translation initiation factor 4E transporter (1010 aa).

Residues 10 to 16 (YSKVDLL) carry the YXXXXLphi motif motif. Disordered stretches follow at residues 154–182 (GSNS…RKGS), 196–277 (PDHD…RLVE), 289–320 (YDSK…SKRG), 354–391 (NEER…SNDS), and 921–960 (QSNP…ERIS). Residues 201–211 (CMSSSPTFSTS) are compositionally biased toward polar residues. Positions 227 to 247 (DNWDYKNEKTVEASIENEKET) are enriched in basic and acidic residues. Residues 248–263 (SPNGSGSTSSLNQHNQ) show a composition bias toward polar residues. Basic and acidic residues-rich tracts occupy residues 354-364 (NEERSVTEDKN) and 372-384 (KNLD…DEAS). Polar residues predominate over residues 934-953 (SDSSDSGNVIKANSLTSPSY).

The protein belongs to the 4E-T/EIF4E-T family. In terms of assembly, interacts (via YXXXXLphi motif) with eIF4E1. Interacts with DDX6/me31B. As to expression, expressed in all larval and adult organs and tissues, with highest levels in the ovary.

The protein resides in the cytoplasm. It is found in the P-body. It localises to the nucleus. Its function is as follows. eIF4E1-binding protein that regulates translation and stability of mRNAs in processing bodies (P-bodies). Probably plays a role in P-bodies to coordinate the storage of translationally inactive mRNAs in the cytoplasm and prevent their degradation. Acts as a binding platform for multiple RNA-binding proteins. Required for the formation of P-bodies. This chain is Eukaryotic translation initiation factor 4E transporter, found in Drosophila melanogaster (Fruit fly).